A 71-amino-acid polypeptide reads, in one-letter code: Heat-stable enterotoxin A (71 aa).

The signal sequence occupies residues 1–19 (MKKIVFVLVLMLSSFGAFG). Residues 20–53 (QETVSGQFSDALSTPITAEVYKQACDPPLPPAEV) constitute a propeptide that is removed on maturation. 3 disulfides stabilise this stretch: C59–C64, C60–C68, and C63–C71.

It belongs to the heat-stable enterotoxin family.

The protein localises to the secreted. Functionally, toxin which activates the particulate form of guanylate cyclase and increases cyclic GMP levels within the host intestinal epithelial cells. In Yersinia enterocolitica, this protein is Heat-stable enterotoxin A (ystA).